Consider the following 360-residue polypeptide: Putative mRNA-decapping protein (360 aa).

The CCHC-type zinc finger occupies 11-28 (HICSNCGRSGHEFRNCIE). Positions 163–347 (YKYDNILYHF…KKRILTRVYL (185 aa)) constitute a Nudix hydrolase domain. Residues 242-264 (GRRDKRSEENMVCACREFEEETG) carry the Nudix box motif. Mg(2+) is bound at residue E249. E258 (nucleophile) is an active-site residue. E262 provides a ligand contact to Mg(2+).

This sequence belongs to the Nudix hydrolase family. DIPP subfamily. Requires Mg(2+) as cofactor. The cofactor is Mn(2+).

It carries out the reaction diphospho-myo-inositol polyphosphate + H2O = myo-inositol polyphosphate + phosphate.. Functionally, might function as a decapping enzyme required for the removal of the 5'-end m7GpppN cap tethered to viral and host mRNAs to allow their decay in cells. In addition to the mRNA cap, probably also efficiently hydrolyzes diphosphoinositol polyphosphates. In Acanthamoeba polyphaga (Amoeba), this protein is Putative mRNA-decapping protein.